The primary structure comprises 134 residues: Small ribosomal subunit protein uS8 (134 aa).

It belongs to the universal ribosomal protein uS8 family. Part of the 30S ribosomal subunit. Contacts proteins S5 and S12.

Its function is as follows. One of the primary rRNA binding proteins, it binds directly to 16S rRNA central domain where it helps coordinate assembly of the platform of the 30S subunit. This is Small ribosomal subunit protein uS8 from Thermotoga neapolitana (strain ATCC 49049 / DSM 4359 / NBRC 107923 / NS-E).